We begin with the raw amino-acid sequence, 64 residues long: Prokaryotic ubiquitin-like protein Pup (64 aa).

Residues 1–37 are disordered; it reads MAQEQTKRGGGGGDDEDVTGTTAAGQERREKLAQDTD. The segment at 21–58 is ARC ATPase binding; sequence TTAAGQERREKLAQDTDDLLDEIDDVLEENAEDFVRAY. The stretch at 25 to 52 forms a coiled coil; the sequence is GQERREKLAQDTDDLLDEIDDVLEENAE. The residue at position 64 (Gln64) is a Deamidated glutamine. An Isoglutamyl lysine isopeptide (Gln-Lys) (interchain with K-? in acceptor proteins) cross-link involves residue Gln64.

This sequence belongs to the prokaryotic ubiquitin-like protein family. In terms of assembly, strongly interacts with the proteasome-associated ATPase ARC through a hydrophobic interface; the interacting region of Pup lies in its C-terminal half. There is one Pup binding site per ARC hexamer ring. Is modified by deamidation of its C-terminal glutamine to glutamate by the deamidase Dop, a prerequisite to the subsequent pupylation process.

It participates in protein degradation; proteasomal Pup-dependent pathway. In terms of biological role, protein modifier that is covalently attached to lysine residues of substrate proteins, thereby targeting them for proteasomal degradation. The tagging system is termed pupylation. This is Prokaryotic ubiquitin-like protein Pup from Mycobacterium marinum (strain ATCC BAA-535 / M).